A 124-amino-acid chain; its full sequence is Holo-[acyl-carrier-protein] synthase (124 aa).

Residues Asp-7 and Glu-55 each coordinate Mg(2+).

The protein belongs to the P-Pant transferase superfamily. AcpS family. Mg(2+) is required as a cofactor.

It localises to the cytoplasm. The catalysed reaction is apo-[ACP] + CoA = holo-[ACP] + adenosine 3',5'-bisphosphate + H(+). In terms of biological role, transfers the 4'-phosphopantetheine moiety from coenzyme A to a Ser of acyl-carrier-protein. The sequence is that of Holo-[acyl-carrier-protein] synthase from Borrelia garinii subsp. bavariensis (strain ATCC BAA-2496 / DSM 23469 / PBi) (Borreliella bavariensis).